Here is a 363-residue protein sequence, read N- to C-terminus: Fructose-bisphosphate aldolase C-B (363 aa).

The substrate site is built by Arg-56 and Lys-147. Residue Glu-188 is the Proton acceptor of the active site. Lys-230 acts as the Schiff-base intermediate with dihydroxyacetone-P in catalysis.

It belongs to the class I fructose-bisphosphate aldolase family. In terms of assembly, homotetramer.

The enzyme catalyses beta-D-fructose 1,6-bisphosphate = D-glyceraldehyde 3-phosphate + dihydroxyacetone phosphate. It participates in carbohydrate degradation; glycolysis; D-glyceraldehyde 3-phosphate and glycerone phosphate from D-glucose: step 4/4. The polypeptide is Fructose-bisphosphate aldolase C-B (aldocb) (Danio rerio (Zebrafish)).